Reading from the N-terminus, the 429-residue chain is Protein ABERRANT PANICLE ORGANIZATION 1 (429 aa).

Over residues 1 to 11 (MMNPRRLPPLP) the composition is skewed to pro residues. The tract at residues 1–21 (MMNPRRLPPLPSSTSSASAAD) is disordered. An F-box domain is found at 25 to 71 (PRVWRRLPQPLVDRVLACLPTPSFLRLRAACRRFYHLLFSSPFLHSH). The next 2 helical transmembrane spans lie at 72 to 92 (LLLS…GHLL) and 112 to 132 (VAGG…LAFL). 3 Kelch repeats span residues 229–277 (MAFA…ELGG), 284–339 (RVAL…AEGG), and 350–397 (YVVL…GAAG).

In terms of assembly, part of a putative SCF (ASK/Cullin/F-box) ubiquitin ligase complex. Interacts with FL/APO2. Expressed in seedlings, roots, leaves, shoot apical meristem (SAM), developing panicles, and, at lower levels, in developing seeds.

The protein resides in the membrane. The protein operates within protein modification; protein ubiquitination. In terms of biological role, component of SCF(ASK-cullin-F-box) E3 ubiquitin ligase complexes, which may mediate the ubiquitination and subsequent proteasomal degradation of target proteins. Together with FL/APO2, involved in the temporal regulation of meristem identity during both vegetative and reproductive developments in an APO2-dependent manner. Promotes spikelet formation by suppressing the precocious conversion of inflorescence meristems to spikelet meristems, probably via a positive regulation of class-C floral homeotic genes, but not of class-B genes, and through the control of cell proliferation in meristems. Mediates culm development and strength/diameter enhancement at internodes. Required for the regulation of the plastochron, floral organ identity, and floral determinacy. Controls the number of primary rachis branches (PRBs). May trigger the formation of vascular bundle systems which, consequently, promote carbohydrate translocation to panicles. Involved in ozone-induced grain yield regulation. The chain is Protein ABERRANT PANICLE ORGANIZATION 1 from Oryza sativa subsp. indica (Rice).